A 313-amino-acid polypeptide reads, in one-letter code: Homoserine O-succinyltransferase (313 aa).

The active-site Acyl-thioester intermediate is Cys142. 2 residues coordinate substrate: Lys163 and Ser192. The active-site Proton acceptor is the His235. Glu237 is an active-site residue. Arg249 is a binding site for substrate.

This sequence belongs to the MetA family.

It localises to the cytoplasm. It carries out the reaction L-homoserine + succinyl-CoA = O-succinyl-L-homoserine + CoA. The protein operates within amino-acid biosynthesis; L-methionine biosynthesis via de novo pathway; O-succinyl-L-homoserine from L-homoserine: step 1/1. In terms of biological role, transfers a succinyl group from succinyl-CoA to L-homoserine, forming succinyl-L-homoserine. The chain is Homoserine O-succinyltransferase from Vibrio vulnificus (strain YJ016).